A 475-amino-acid chain; its full sequence is Glycogen synthase (475 aa).

Lys-15 contributes to the ADP-alpha-D-glucose binding site.

The protein belongs to the glycosyltransferase 1 family. Bacterial/plant glycogen synthase subfamily.

The enzyme catalyses [(1-&gt;4)-alpha-D-glucosyl](n) + ADP-alpha-D-glucose = [(1-&gt;4)-alpha-D-glucosyl](n+1) + ADP + H(+). It functions in the pathway glycan biosynthesis; glycogen biosynthesis. In terms of biological role, synthesizes alpha-1,4-glucan chains using ADP-glucose. In Alkaliphilus metalliredigens (strain QYMF), this protein is Glycogen synthase.